The sequence spans 113 residues: ATP-dependent Clp protease adapter protein ClpS (113 aa).

The tract at residues 1-26 (MLMQPLMMSDNPDDESDLGLLTKTRP) is disordered.

The protein belongs to the ClpS family. As to quaternary structure, binds to the N-terminal domain of the chaperone ClpA.

Involved in the modulation of the specificity of the ClpAP-mediated ATP-dependent protein degradation. This is ATP-dependent Clp protease adapter protein ClpS from Ruegeria sp. (strain TM1040) (Silicibacter sp.).